A 585-amino-acid polypeptide reads, in one-letter code: Auxin response factor 17 (585 aa).

Positions F119–P221 form a DNA-binding region, TF-B3. Disordered stretches follow at residues E483–L517 and E535–G585. Over residues G488–L510 the composition is skewed to low complexity. Over residues K573–G585 the composition is skewed to polar residues.

Belongs to the ARF family. As to quaternary structure, homo and heterodimers.

The protein resides in the nucleus. Auxin response factors (ARFs) are transcriptional factors that bind specifically to the DNA sequence 5'-TGTCTC-3' found in the auxin-responsive promoter elements (AuxREs). Could act as transcriptional activator or repressor. Formation of heterodimers with Aux/IAA proteins may alter their ability to modulate early auxin response genes expression. The sequence is that of Auxin response factor 17 (ARF17) from Arabidopsis thaliana (Mouse-ear cress).